The primary structure comprises 193 residues: Xanthine phosphoribosyltransferase (193 aa).

Xanthine contacts are provided by Leu20 and Thr27. 5-phospho-alpha-D-ribose 1-diphosphate is bound at residue 128-132 (ANGQA). Lys156 contributes to the xanthine binding site.

It belongs to the purine/pyrimidine phosphoribosyltransferase family. Xpt subfamily. In terms of assembly, homodimer.

Its subcellular location is the cytoplasm. It catalyses the reaction XMP + diphosphate = xanthine + 5-phospho-alpha-D-ribose 1-diphosphate. Its pathway is purine metabolism; XMP biosynthesis via salvage pathway; XMP from xanthine: step 1/1. Its function is as follows. Converts the preformed base xanthine, a product of nucleic acid breakdown, to xanthosine 5'-monophosphate (XMP), so it can be reused for RNA or DNA synthesis. The sequence is that of Xanthine phosphoribosyltransferase from Streptococcus pneumoniae (strain CGSP14).